The chain runs to 159 residues: Putative transcriptional regulatory protein rrnAC0199 (159 aa).

The protein belongs to the Tfx family.

Its function is as follows. Putative transcriptional regulator. The protein is Putative transcriptional regulatory protein rrnAC0199 of Haloarcula marismortui (strain ATCC 43049 / DSM 3752 / JCM 8966 / VKM B-1809) (Halobacterium marismortui).